Here is a 1493-residue protein sequence, read N- to C-terminus: Mediator of RNA polymerase II transcription subunit 14 (1493 aa).

Disordered regions lie at residues 1-51 (MPSS…YHAA), 71-110 (MIGV…SAKG), 408-427 (TEQG…APTV), 674-693 (QRPR…RSAS), 894-913 (EAGT…NDVD), and 957-997 (GSNT…SSDD). Residues 90–100 (PDSKQSSDADG) are compositionally biased toward basic and acidic residues.

Belongs to the Mediator complex subunit 14 family. As to quaternary structure, component of the Mediator complex.

The protein localises to the nucleus. Its function is as follows. Component of the Mediator complex, a coactivator involved in the regulated transcription of nearly all RNA polymerase II-dependent genes. Mediator functions as a bridge to convey information from gene-specific regulatory proteins to the basal RNA polymerase II transcription machinery. Mediator is recruited to promoters by direct interactions with regulatory proteins and serves as a scaffold for the assembly of a functional preinitiation complex with RNA polymerase II and the general transcription factors. This chain is Mediator of RNA polymerase II transcription subunit 14 (RGR1), found in Mycosarcoma maydis (Corn smut fungus).